A 1551-amino-acid chain; its full sequence is UDP-glucose:glycoprotein glucosyltransferase 1 (1551 aa).

A signal peptide spans M1–A42. 4 N-linked (GlcNAc...) asparagine glycosylation sites follow: N269, N536, N1015, and N1228. Residues K1244–L1551 form a glucosyltransferase region. Residue S1277 is modified to Phosphoserine. The tract at residues K1531–L1551 is disordered. The short motif at H1548–L1551 is the Prevents secretion from ER element.

This sequence belongs to the glycosyltransferase 8 family. As to quaternary structure, monomer as well as in a tight complex with SELENOF. Interacts with METTL23. Part of a large chaperone multiprotein complex comprising DNAJB11, HSP90B1, HSPA5, HYOU, PDIA2, PDIA4, PDIA6, PPIB, SDF2L1, UGGT1 and very small amounts of ERP29, but not, or at very low levels, CALR nor CANX. Requires Ca(2+) as cofactor.

It is found in the endoplasmic reticulum lumen. The protein resides in the endoplasmic reticulum-Golgi intermediate compartment. The enzyme catalyses N(4)-(alpha-D-Man-(1-&gt;2)-alpha-D-Man-(1-&gt;2)-alpha-D-Man-(1-&gt;3)-[alpha-D-Man-(1-&gt;2)-alpha-D-Man-(1-&gt;3)-[alpha-D-Man-(1-&gt;2)-alpha-D-Man-(1-&gt;6)]-alpha-D-Man-(1-&gt;6)]-beta-D-Man-(1-&gt;4)-beta-D-GlcNAc-(1-&gt;4)-beta-D-GlcNAc)-L-asparaginyl-[protein] (N-glucan mannose isomer 9A1,2,3B1,2,3) + UDP-alpha-D-glucose = N(4)-(alpha-D-Glc-(1-&gt;3)-alpha-D-Man-(1-&gt;2)-alpha-D-Man-(1-&gt;2)-alpha-D-Man-(1-&gt;3)-[alpha-D-Man-(1-&gt;2)-alpha-D-Man-(1-&gt;3)-[alpha-D-Man-(1-&gt;2)-alpha-D-Man-(1-&gt;6)]-alpha-D-Man-(1-&gt;6)]-beta-D-Man-(1-&gt;4)-beta-D-GlcNAc-(1-&gt;4)-beta-D-GlcNAc)-L-asparaginyl-[protein] + UDP + H(+). It functions in the pathway protein modification; protein glycosylation. Its function is as follows. Recognizes glycoproteins with minor folding defects. Reglucosylates single N-glycans near the misfolded part of the protein, thus providing quality control for protein folding in the endoplasmic reticulum. Reglucosylated proteins are recognized by calreticulin for recycling to the endoplasmic reticulum and refolding or degradation. This Rattus norvegicus (Rat) protein is UDP-glucose:glycoprotein glucosyltransferase 1 (Uggt1).